The chain runs to 120 residues: Nascent polypeptide-associated complex protein (120 aa).

One can recognise an NAC-A/B domain in the interval 12-80; sequence GMNPAKMKQM…VKEVPKSLEI (69 aa).

It belongs to the NAC-alpha family. Homodimer. Interacts with the ribosome. Binds ribosomal RNA.

Its function is as follows. Contacts the emerging nascent chain on the ribosome. This chain is Nascent polypeptide-associated complex protein, found in Methanosarcina mazei (strain ATCC BAA-159 / DSM 3647 / Goe1 / Go1 / JCM 11833 / OCM 88) (Methanosarcina frisia).